Consider the following 381-residue polypeptide: Peptidoglycan glycosyltransferase MrdB (381 aa).

Helical transmembrane passes span 11–31 (FDLL…LLIF), 40–60 (KQGV…FIPF), 66–86 (WLFV…FMGY), 99–119 (FISI…LLLA), 132–152 (YDWG…ALIL), 156–176 (DLGT…IVGL), 180–200 (VWLP…HFLH), 263–283 (FGFL…LHLF), 297–317 (IVAL…IAMT), and 328–348 (LPLF…FGIL).

This sequence belongs to the SEDS family. MrdB/RodA subfamily.

Its subcellular location is the cell inner membrane. It catalyses the reaction [GlcNAc-(1-&gt;4)-Mur2Ac(oyl-L-Ala-gamma-D-Glu-L-Lys-D-Ala-D-Ala)](n)-di-trans,octa-cis-undecaprenyl diphosphate + beta-D-GlcNAc-(1-&gt;4)-Mur2Ac(oyl-L-Ala-gamma-D-Glu-L-Lys-D-Ala-D-Ala)-di-trans,octa-cis-undecaprenyl diphosphate = [GlcNAc-(1-&gt;4)-Mur2Ac(oyl-L-Ala-gamma-D-Glu-L-Lys-D-Ala-D-Ala)](n+1)-di-trans,octa-cis-undecaprenyl diphosphate + di-trans,octa-cis-undecaprenyl diphosphate + H(+). The protein operates within cell wall biogenesis; peptidoglycan biosynthesis. Functionally, peptidoglycan polymerase that is essential for cell wall elongation. This Helicobacter pylori (strain ATCC 700392 / 26695) (Campylobacter pylori) protein is Peptidoglycan glycosyltransferase MrdB.